A 210-amino-acid chain; its full sequence is HTH-type transcriptional repressor ComR (210 aa).

The HTH tetR-type domain occupies 18-78; the sequence is VFDRDAALDK…AVLDRYIDRF (61 aa). Residues 41–60 constitute a DNA-binding region (H-T-H motif); the sequence is SLADLVEATGAKAPTLYAEF.

Binding to the promoter region of BhsA/ComC is released in the presence of copper. Functionally, represses expression of BhsA/ComC by binding to its promoter region in the absence of copper. This Escherichia coli (strain K12) protein is HTH-type transcriptional repressor ComR (comR).